The following is a 221-amino-acid chain: Triosephosphate isomerase (221 aa).

Position 8-10 (8-10 (NLK)) interacts with substrate. The Electrophile role is filled by H92. The active-site Proton acceptor is the E140. Substrate-binding positions include I145, G180, and 201–202 (AS).

It belongs to the triosephosphate isomerase family. Homotetramer; dimer of dimers.

The protein resides in the cytoplasm. The enzyme catalyses D-glyceraldehyde 3-phosphate = dihydroxyacetone phosphate. It functions in the pathway carbohydrate biosynthesis; gluconeogenesis. It participates in carbohydrate degradation; glycolysis; D-glyceraldehyde 3-phosphate from glycerone phosphate: step 1/1. Functionally, involved in the gluconeogenesis. Catalyzes stereospecifically the conversion of dihydroxyacetone phosphate (DHAP) to D-glyceraldehyde-3-phosphate (G3P). The protein is Triosephosphate isomerase of Methanococcoides burtonii (strain DSM 6242 / NBRC 107633 / OCM 468 / ACE-M).